The sequence spans 446 residues: Histidinol dehydrogenase homolog (446 aa).

His266 contacts Zn(2+). Active-site proton acceptor residues include Glu334 and His335. Zn(2+) is bound at residue His427.

The protein belongs to the histidinol dehydrogenase family. Zn(2+) serves as cofactor.

This Colwellia psychrerythraea (strain 34H / ATCC BAA-681) (Vibrio psychroerythus) protein is Histidinol dehydrogenase homolog.